We begin with the raw amino-acid sequence, 416 residues long: Probable protein phosphatase 2C 49 (416 aa).

The region spanning 91-411 is the PPM-type phosphatase domain; that stretch reads RYGVTSVFGR…DNVSVVVVDL (321 aa). Positions 131, 132, and 319 each coordinate Mn(2+). Pro residues predominate over residues 343-360; that stretch reads PPSPPGCSRPKAVLPPPA. The segment at 343 to 368 is disordered; it reads PPSPPGCSRPKAVLPPPAGASGGGGG. Asp402 provides a ligand contact to Mn(2+).

The protein belongs to the PP2C family. Mg(2+) serves as cofactor. Mn(2+) is required as a cofactor.

It carries out the reaction O-phospho-L-seryl-[protein] + H2O = L-seryl-[protein] + phosphate. The enzyme catalyses O-phospho-L-threonyl-[protein] + H2O = L-threonyl-[protein] + phosphate. The polypeptide is Probable protein phosphatase 2C 49 (Oryza sativa subsp. japonica (Rice)).